The sequence spans 491 residues: Ketol-acid reductoisomerase (NADP(+)) (491 aa).

Residues 15–208 (AQLGKCRFMG…GGHRAGVLES (194 aa)) enclose the KARI N-terminal Rossmann domain. Residues 45 to 48 (CGAQ), Arg-68, Arg-76, Ser-78, and 108 to 110 (DKQ) contribute to the NADP(+) site. Residue His-132 is part of the active site. Gly-158 serves as a coordination point for NADP(+). KARI C-terminal knotted domains lie at 209–344 (SFVA…TAPQ) and 345–484 (YEGK…MTDM). Residues Asp-217, Glu-221, Glu-389, and Glu-393 each contribute to the Mg(2+) site. Position 414 (Ser-414) interacts with substrate.

The protein belongs to the ketol-acid reductoisomerase family. The cofactor is Mg(2+).

It catalyses the reaction (2R)-2,3-dihydroxy-3-methylbutanoate + NADP(+) = (2S)-2-acetolactate + NADPH + H(+). The enzyme catalyses (2R,3R)-2,3-dihydroxy-3-methylpentanoate + NADP(+) = (S)-2-ethyl-2-hydroxy-3-oxobutanoate + NADPH + H(+). Its pathway is amino-acid biosynthesis; L-isoleucine biosynthesis; L-isoleucine from 2-oxobutanoate: step 2/4. It participates in amino-acid biosynthesis; L-valine biosynthesis; L-valine from pyruvate: step 2/4. In terms of biological role, involved in the biosynthesis of branched-chain amino acids (BCAA). Catalyzes an alkyl-migration followed by a ketol-acid reduction of (S)-2-acetolactate (S2AL) to yield (R)-2,3-dihydroxy-isovalerate. In the isomerase reaction, S2AL is rearranged via a Mg-dependent methyl migration to produce 3-hydroxy-3-methyl-2-ketobutyrate (HMKB). In the reductase reaction, this 2-ketoacid undergoes a metal-dependent reduction by NADPH to yield (R)-2,3-dihydroxy-isovalerate. The polypeptide is Ketol-acid reductoisomerase (NADP(+)) (Escherichia coli O157:H7).